A 502-amino-acid polypeptide reads, in one-letter code: Dynein regulatory complex subunit 2 (502 aa).

Coiled coils occupy residues 96 to 160 (DSVI…RKAI) and 252 to 285 (EKSS…HSRE).

It belongs to the DRC2 family. In terms of assembly, component of the nexin-dynein regulatory complex (N-DRC). Interacts with DRC1.

It localises to the cytoplasm. The protein localises to the cytoskeleton. The protein resides in the flagellum basal body. It is found in the cell projection. Its subcellular location is the cilium. It localises to the flagellum. The protein localises to the flagellum axoneme. In terms of biological role, component of the nexin-dynein regulatory complex (N-DRC), a key regulator of ciliary/flagellar motility which maintains the alignment and integrity of the distal axoneme and regulates microtubule sliding in motile axonemes. Plays a critical role in the assembly of N-DRC and also stabilizes the assembly of multiple inner dynein arms and radial spokes. Coassembles with DRC1 to form a central scaffold needed for assembly of the N-DRC and its attachment to the outer doublet microtubules. This Rattus norvegicus (Rat) protein is Dynein regulatory complex subunit 2 (Ccdc65).